A 607-amino-acid polypeptide reads, in one-letter code: Glycosyltransferase 25 family member (607 aa).

Positions 1-22 (MKPVSCVGLLVLLVGVLVTVKG) are cleaved as a signal peptide. N-linked (GlcNAc...) asparagine glycosylation is found at N226, N254, N514, and N565. The disordered stretch occupies residues 566-607 (DTSDSSAEKKGDKEQLSSKTLMDSTISRDEHELSVANRKSEL). Basic and acidic residues-rich tracts occupy residues 571–581 (SAEKKGDKEQL) and 591–607 (ISRD…KSEL). A Prevents secretion from ER motif is present at residues 604–607 (KSEL).

Belongs to the glycosyltransferase 25 family.

It localises to the endoplasmic reticulum lumen. The polypeptide is Glycosyltransferase 25 family member (Aedes aegypti (Yellowfever mosquito)).